The primary structure comprises 522 residues: Non-structural maintenance of chromosome element 6 (522 aa).

The segment covering 482–492 (KQKDRYFKDKT) has biased composition (basic and acidic residues). The tract at residues 482–522 (KQKDRYFKDKTSNLSMKENKSFSAKKVKKGKKKNKRQAYKR) is disordered. Residues 504–522 (SAKKVKKGKKKNKRQAYKR) are compositionally biased toward basic residues.

As to quaternary structure, component of the smc5/smc6 complex which consists of two subcomplexes, smc5-smc6-nse2 and nse1-nse2-nse4. Interacts with nse5.

The protein localises to the nucleus. It localises to the chromosome. Acts in a DNA repair pathway for removal of UV-induced DNA damage that is distinct from classical nucleotide excision repair and in repair of ionizing radiation damage. Functions in homologous recombination repair of DNA double strand breaks and in recovery of stalled replication forks. May prevent formation of excessive Holliday junctions or assist in their resolution. This Schizosaccharomyces pombe (strain 972 / ATCC 24843) (Fission yeast) protein is Non-structural maintenance of chromosome element 6 (nse6).